The following is a 194-amino-acid chain: Imidazoleglycerol-phosphate dehydratase (194 aa).

It belongs to the imidazoleglycerol-phosphate dehydratase family.

The protein resides in the cytoplasm. The catalysed reaction is D-erythro-1-(imidazol-4-yl)glycerol 3-phosphate = 3-(imidazol-4-yl)-2-oxopropyl phosphate + H2O. It participates in amino-acid biosynthesis; L-histidine biosynthesis; L-histidine from 5-phospho-alpha-D-ribose 1-diphosphate: step 6/9. The polypeptide is Imidazoleglycerol-phosphate dehydratase (Ruminiclostridium cellulolyticum (strain ATCC 35319 / DSM 5812 / JCM 6584 / H10) (Clostridium cellulolyticum)).